We begin with the raw amino-acid sequence, 247 residues long: Granulin (247 aa).

Belongs to the polyhedrin family.

Its function is as follows. Component of the virus occlusion bodies, which are large proteinaceous structures, that protect the virus from the outside environment for extended periods until they are ingested by insect larvae. This is Granulin from Pieris brassicae granulosis virus (PbGV).